The chain runs to 674 residues: Polyunsaturated fatty acid 5-lipoxygenase (674 aa).

In terms of domain architecture, PLAT spans 2-118; sequence PSYTVTVATG…EVVLRDGRAK (117 aa). Residues Gly-17, Thr-18, Asp-19, Asn-44, Asp-45, Glu-47, Asp-79, and Asp-80 each contribute to the Ca(2+) site. Residues 119–674 form the Lipoxygenase domain; that stretch reads LARDDQIHIL…PDRIPNSVAI (556 aa). Ser-272 carries the phosphoserine; by MAPKAPK2 modification. Residues His-368 and His-373 each coordinate Fe cation. Ser-524 carries the phosphoserine; by PKA modification. 3 residues coordinate Fe cation: His-551, Asn-555, and Ile-674.

The protein belongs to the lipoxygenase family. In terms of assembly, homodimer. Interacts with ALOX5AP and LTC4S. Interacts with COTL1, the interaction is required for stability and efficient catalytic activity. Interacts with PIK3R1; this interaction bridges ALOX5 with CD40 after CD40 ligation in B cells and leads to the production of reactive oxygen species (ROS). Interacts (via PLAT domain) with DICER1 (via Dicer dsRNA-binding fold domain); this interaction enhances arachidonate 5-lipoxygenase activity and modifies the miRNA precursor processing activity of DICER1. It depends on Fe cation as a cofactor. Post-translationally, serine phosphorylation by MAPKAPK2 is stimulated by arachidonic acid. Phosphorylation on Ser-524 by PKA has an inhibitory effect. Phosphorylation on Ser-272 prevents export from the nucleus. Phosphorylation at Ser-524 is stimulated by 8-bromo-3',5'-cyclic AMP or prostaglandin E2.

The protein localises to the cytoplasm. The protein resides in the nucleus matrix. It is found in the nucleus membrane. It localises to the perinuclear region. Its subcellular location is the cytosol. The protein localises to the nucleus envelope. The protein resides in the nucleus intermembrane space. The enzyme catalyses (5Z,8Z,11Z,14Z)-eicosatetraenoate + O2 = leukotriene A4 + H2O. It catalyses the reaction 18-HEPE + O2 = (5S)-hydroperoxy-18-hydroxy-(7E,9E,11Z,14Z,16E)-eicosapentaenoate. The catalysed reaction is (18R)-hydroxy-(5Z,8Z,11Z,14Z,16E)-eicosapentaenoate + O2 = (5S)-hydroperoxy-(18R)-hydroxy-(6E,8Z,11Z,14Z,16E)-eicosapentaenoate. It carries out the reaction (18S)-hydroxy-(5Z,8Z,11Z,14Z,16E)-eicosapentaenoate + O2 = (5S)-hydroperoxy-(18S)-hydroxy-(6E,8Z,11Z,14Z,16E)-eicosapentaenoate. The enzyme catalyses (5S)-hydroperoxy-(18S)-hydroxy-(6E,8Z,11Z,14Z,16E)-eicosapentaenoate = (5S,6S)-epoxy-(18S)-hydroxy-(7E,9E,11Z,14Z,16E)-eicosapentaenoate + H2O. It catalyses the reaction (5S)-hydroperoxy-(18R)-hydroxy-(6E,8Z,11Z,14Z,16E)-eicosapentaenoate = (5S,6S)-epoxy-(18R)-hydroxy-(7E,9E,11Z,14Z,16E)-eicosapentaenoate + H2O. The catalysed reaction is (5S)-hydroperoxy-18-hydroxy-(7E,9E,11Z,14Z,16E)-eicosapentaenoate = (5S,6S)-epoxy-18-hydroxy-(7E,9E,11Z,14Z,16E)-eicosapentaenoate + H2O. It carries out the reaction (5Z,8Z,11Z,14Z)-eicosatetraenoate + O2 = (5S)-hydroperoxy-(6E,8Z,11Z,14Z)-eicosatetraenoate. The enzyme catalyses (15S)-hydroxy-(5Z,8Z,11Z,13E)-eicosatetraenoate + O2 = (5S)-hydroperoxy-(15S)-hydroxy-(6E,8Z,11Z,13E)-eicosatetraenoate. It catalyses the reaction (5S)-hydroperoxy-(6E,8Z,11Z,14Z)-eicosatetraenoate = leukotriene A4 + H2O. The catalysed reaction is (5Z,8Z,11Z,14Z)-eicosatetraenoate + O2 = (8S)-hydroperoxy-(5Z,9E,11Z,14Z)-eicosatetraenoate. It carries out the reaction (5Z,8Z,11Z,14Z)-eicosatetraenoate + O2 = (12S)-hydroperoxy-(5Z,8Z,10E,14Z)-eicosatetraenoate. The enzyme catalyses (5Z,8Z)-eicosadienoate + O2 = (5S)-hydroperoxy-(6E,8Z)-eicosadienoate. It catalyses the reaction (12S)-hydroxy-(5Z,8Z,10E,14Z)-eicosatetraenoate + O2 = (5S)-hydroperoxy-(12S)-hydroxy-(6E,8Z,10E,14Z)-eicosatetraenoate. The catalysed reaction is (5Z,8Z,11Z,14Z,17Z)-eicosapentaenoate + O2 = 5-hydroperoxy-(6E,8Z,11Z,14Z,17Z)-eicosapentaenoate. It carries out the reaction (4Z,7Z,10Z,13Z,16Z,19Z)-docosahexaenoate + O2 = (14S)-hydroperoxy-(4Z,7Z,10Z,12E,16Z,19Z)-docosahexaenoate. The enzyme catalyses (4Z,7Z,10Z,13Z,16Z,19Z)-docosahexaenoate + O2 = (7S)-hydroperoxy-(4Z,8E,10Z,13Z,16Z,19Z)-docosahexaenoate. It catalyses the reaction (4Z,7Z,10Z,13Z,16Z,19Z)-docosahexaenoate + O2 = (17S)-hydroperoxy-(4Z,7Z,10Z,13Z,15E,19Z)-docosahexaenoate. It participates in lipid metabolism; leukotriene A4 biosynthesis. With respect to regulation, undergoes a sequential loss of the oxygenase and pseudoperoxidase activities which is dependent on the structural characteristics of the substrate for the reaction, on oxygen concentration and on exposure to phospholipids and calcium. 15-HETE and other 15-mono-hydroxyeicosanoids exhibit the highest inhibitory potencies in their capability of suppressing 5-lipoxygenation of arachidonic acid, whereas the other HETEs, (5S,15S)-dihydroxy-(6E,8Z,11Z,13E)-eicosatetraenoic acid (5,15-diHETE) as well as octadecanoids, are modest or poor inhibitors. The formation of (5S)-hydroperoxy-(15S)-hydroxy-(6E,8Z,11Z,13E)-eicosatetraenoate is strongly stimulated by either hydroperoxypolyenoic fatty acids or arachidonic acid. Arachidonate 5-lipoxygenase and leukotriene A4 synthase activities are allosterically increased by ATP. Catalyzes the oxygenation of arachidonate ((5Z,8Z,11Z,14Z)-eicosatetraenoate) to 5-hydroperoxyeicosatetraenoate (5-HPETE) followed by the dehydration to 5,6- epoxyeicosatetraenoate (Leukotriene A4/LTA4), the first two steps in the biosynthesis of leukotrienes, which are potent mediators of inflammation. Also catalyzes the oxygenation of arachidonate into 8-hydroperoxyicosatetraenoate (8-HPETE) and 12-hydroperoxyicosatetraenoate (12-HPETE). Displays lipoxin synthase activity being able to convert (15S)-HETE into a conjugate tetraene. Although arachidonate is the preferred substrate, this enzyme can also metabolize oxidized fatty acids derived from arachidonate such as (15S)-HETE, eicosapentaenoate (EPA) such as (18R)- and (18S)-HEPE or docosahexaenoate (DHA) which lead to the formation of specialized pro-resolving mediators (SPM) lipoxin and resolvins E and D respectively, therefore it participates in anti-inflammatory responses. Oxidation of DHA directly inhibits endothelial cell proliferation and sprouting angiogenesis via peroxisome proliferator-activated receptor gamma (PPARgamma). It does not catalyze the oxygenation of linoleic acid and does not convert (5S)-HETE to lipoxin isomers. In addition to inflammatory processes, it participates in dendritic cell migration, wound healing through an antioxidant mechanism based on heme oxygenase-1 (HO-1) regulation expression, monocyte adhesion to the endothelium via ITGAM expression on monocytes. Moreover, it helps establish an adaptive humoral immunity by regulating primary resting B cells and follicular helper T cells and participates in the CD40-induced production of reactive oxygen species (ROS) after CD40 ligation in B cells through interaction with PIK3R1 that bridges ALOX5 with CD40. May also play a role in glucose homeostasis, regulation of insulin secretion and palmitic acid-induced insulin resistance via AMPK. Can regulate bone mineralization and fat cell differentiation increases in induced pluripotent stem cells. The chain is Polyunsaturated fatty acid 5-lipoxygenase from Homo sapiens (Human).